The sequence spans 393 residues: NAD(P)H-quinone oxidoreductase subunit H, chloroplastic (393 aa).

Belongs to the complex I 49 kDa subunit family. As to quaternary structure, NDH is composed of at least 16 different subunits, 5 of which are encoded in the nucleus.

The protein resides in the plastid. It is found in the chloroplast thylakoid membrane. The catalysed reaction is a plastoquinone + NADH + (n+1) H(+)(in) = a plastoquinol + NAD(+) + n H(+)(out). It carries out the reaction a plastoquinone + NADPH + (n+1) H(+)(in) = a plastoquinol + NADP(+) + n H(+)(out). Functionally, NDH shuttles electrons from NAD(P)H:plastoquinone, via FMN and iron-sulfur (Fe-S) centers, to quinones in the photosynthetic chain and possibly in a chloroplast respiratory chain. The immediate electron acceptor for the enzyme in this species is believed to be plastoquinone. Couples the redox reaction to proton translocation, and thus conserves the redox energy in a proton gradient. The chain is NAD(P)H-quinone oxidoreductase subunit H, chloroplastic from Piper cenocladum (Ant piper).